A 136-amino-acid polypeptide reads, in one-letter code: Histone H2A (136 aa).

Over residues 1–11 (MTGGKSAGGKA) the composition is skewed to gly residues. The interval 1–23 (MTGGKSAGGKAGTTKNAQSRSSK) is disordered. Residues Lys-5 and Lys-10 each carry the N6-acetyllysine modification. At Gln-107 the chain carries N5-methylglutamine. Ser-133 bears the Phosphoserine mark. Residues 133 to 134 (SQ) carry the [ST]-Q motif motif.

It belongs to the histone H2A family. As to quaternary structure, the nucleosome is a histone octamer containing two molecules each of H2A, H2B, H3 and H4 assembled in one H3-H4 heterotetramer and two H2A-H2B heterodimers. The octamer wraps approximately 147 bp of DNA. Phosphorylated to form H2AS128ph (gamma-H2A) in response to DNA double-strand breaks (DSBs) generated by exogenous genotoxic agents and by stalled replication forks. Phosphorylation is dependent on the DNA damage checkpoint kinases MEC1/ATR and TEL1/ATM, spreads on either side of a detected DSB site and may mark the surrounding chromatin for recruitment of proteins required for DNA damage signaling and repair. Gamma-H2A is removed from the DNA prior to the strand invasion-primer extension step of the repair process and subsequently dephosphorylated. Dephosphorylation is necessary for efficient recovery from the DNA damage checkpoint. In terms of processing, acetylated by ESA1 to form H2AK4ac and H2AK7ac.

Its subcellular location is the nucleus. The protein localises to the chromosome. Core component of nucleosome which plays a central role in DNA double strand break (DSB) repair. Nucleosomes wrap and compact DNA into chromatin, limiting DNA accessibility to the cellular machineries which require DNA as a template. Histones thereby play a central role in transcription regulation, DNA repair, DNA replication and chromosomal stability. DNA accessibility is regulated via a complex set of post-translational modifications of histones, also called histone code, and nucleosome remodeling. This is Histone H2A (hta1) from Botryotinia fuckeliana (strain B05.10) (Noble rot fungus).